Consider the following 446-residue polypeptide: Probable glycine dehydrogenase (decarboxylating) subunit 1 (446 aa).

It belongs to the GcvP family. N-terminal subunit subfamily. The glycine cleavage system is composed of four proteins: P, T, L and H. In this organism, the P 'protein' is a heterodimer of two subunits.

It catalyses the reaction N(6)-[(R)-lipoyl]-L-lysyl-[glycine-cleavage complex H protein] + glycine + H(+) = N(6)-[(R)-S(8)-aminomethyldihydrolipoyl]-L-lysyl-[glycine-cleavage complex H protein] + CO2. Functionally, the glycine cleavage system catalyzes the degradation of glycine. The P protein binds the alpha-amino group of glycine through its pyridoxal phosphate cofactor; CO(2) is released and the remaining methylamine moiety is then transferred to the lipoamide cofactor of the H protein. The protein is Probable glycine dehydrogenase (decarboxylating) subunit 1 of Desulfitobacterium hafniense (strain DSM 10664 / DCB-2).